A 226-amino-acid polypeptide reads, in one-letter code: Ribonuclease HII (226 aa).

Residues 24–216 (QRLCGVDEAG…VRKVLERGMV (193 aa)) form the RNase H type-2 domain. 3 residues coordinate a divalent metal cation: Asp-30, Glu-31, and Asp-125.

Belongs to the RNase HII family. Mn(2+) is required as a cofactor. The cofactor is Mg(2+).

Its subcellular location is the cytoplasm. The enzyme catalyses Endonucleolytic cleavage to 5'-phosphomonoester.. Endonuclease that specifically degrades the RNA of RNA-DNA hybrids. In Cupriavidus metallidurans (strain ATCC 43123 / DSM 2839 / NBRC 102507 / CH34) (Ralstonia metallidurans), this protein is Ribonuclease HII.